The chain runs to 560 residues: Choline/ethanolamine transporter FLVCR1 (560 aa).

A disordered region spans residues methionine 1–glutamate 43. Residues methionine 1–proline 92 are Cytoplasmic-facing. The helical transmembrane segment at arginine 93–glutamine 117 threads the bilayer. At tryptophan 118–serine 135 the chain is on the extracellular side. A helical transmembrane segment spans residues proline 136–threonine 163. Residues arginine 164 to glycine 165 are Cytoplasmic-facing. The chain crosses the membrane as a helical span at residues leucine 166–cysteine 185. The Extracellular segment spans residues glycine 186 to leucine 192. Residues phenylalanine 193–tryptophan 221 form a helical membrane-spanning segment. Residue glutamine 207 participates in ethanolamine binding. The Cytoplasmic segment spans residues phenylalanine 222–glutamate 226. Residues valine 227–leucine 252 traverse the membrane as a helical segment. Over valine 253–asparagine 270 the chain is Extracellular. A glycan (N-linked (GlcNAc...) asparagine) is linked at asparagine 270. Residues asparagine 271 to alanine 300 form a helical membrane-spanning segment. The Cytoplasmic segment spans residues phenylalanine 301–asparagine 336. A helical membrane pass occupies residues isoleucine 337–tyrosine 367. The Extracellular portion of the chain corresponds to tyrosine 368–glutamate 371. Residues glutamate 372–threonine 400 traverse the membrane as a helical segment. The Cytoplasmic segment spans residues lysine 401–threonine 402. The helical transmembrane segment at tyrosine 403–leucine 425 threads the bilayer. Topologically, residues asparagine 426–glycine 428 are extracellular. A helical transmembrane segment spans residues tyrosine 429–isoleucine 458. Over threonine 459–methionine 466 the chain is Cytoplasmic. The chain crosses the membrane as a helical span at residues serine 467–aspartate 492. Position 476 (glutamine 476) interacts with ethanolamine. Residue glutamine 476 participates in choline binding. The Extracellular segment spans residues tyrosine 493–serine 495. Residues proline 496–lysine 518 traverse the membrane as a helical segment. The Cytoplasmic portion of the chain corresponds to serine 519–leucine 560. Serine 542 bears the Phosphoserine mark.

The protein belongs to the major facilitator superfamily. Feline leukemia virus subgroup C receptor (TC 2.A.1.28.1) family.

Its subcellular location is the cell membrane. It localises to the mitochondrion membrane. It carries out the reaction choline(out) = choline(in). The enzyme catalyses ethanolamine(in) = ethanolamine(out). It catalyses the reaction heme b(in) = heme b(out). Its function is as follows. Uniporter that mediates the transport of extracellular choline and ethanolamine into cells, thereby playing a key role in phospholipid biosynthesis. Choline and ethanolamine are the precursors of phosphatidylcholine and phosphatidylethanolamine, respectively, the two most abundant phospholipids. Transport is not coupled with proton transport and is exclusively driven by the choline (or ethanolamine) gradient across the plasma membrane. Also acts as a heme b transporter that mediates heme efflux from the cytoplasm to the extracellular compartment. In terms of biological role, uniporter that mediates the transport of extracellular choline and ethanolamine into cells. Choline and ethanolamine are the precursors of phosphatidylcholine and phosphatidylethanolamine, respectively, the two most abundant phospholipids. Transport is not coupled with proton transport and is exclusively driven by the choline (or ethanolamine) gradient across the plasma membrane. Also acts as a heme b transporter that mediates heme efflux from the cytoplasm to the extracellular compartment. Heme export depends on the presence of HPX and is required to maintain intracellular free heme balance, protecting cells from heme toxicity. Heme export provides protection from heme or ferrous iron toxicities in liver, brain, sensory neurons and during erythropoiesis, a process in which heme synthesis intensifies. Possibly export coproporphyrin and protoporphyrin IX, which are both intermediate products in the heme biosynthetic pathway. Does not export bilirubin. The molecular mechanism of heme transport, whether electrogenic, electroneutral or coupled to other ions, remains to be elucidated. Functionally, heme transporter that promotes heme efflux from the mitochondrion to the cytoplasm. Essential for erythroid differentiation. The polypeptide is Choline/ethanolamine transporter FLVCR1 (Flvcr1) (Mus musculus (Mouse)).